Here is a 423-residue protein sequence, read N- to C-terminus: uncharacterized protein (423 aa).

The signal sequence occupies residues 1 to 16 (MKSRIFFITLLTIVAA). Topologically, residues 17-402 (QESADQLCSS…SSSAKEEQTS (386 aa)) are extracellular. 16 cysteine pairs are disulfide-bonded: cysteine 24-cysteine 217, cysteine 33-cysteine 43, cysteine 36-cysteine 68, cysteine 46-cysteine 57, cysteine 219-cysteine 238, cysteine 230-cysteine 241, cysteine 243-cysteine 252, cysteine 254-cysteine 288, cysteine 271-cysteine 286, cysteine 280-cysteine 291, cysteine 293-cysteine 303, cysteine 305-cysteine 327, cysteine 310-cysteine 325, cysteine 319-cysteine 330, cysteine 332-cysteine 341, and cysteine 343-cysteine 350. Asparagine 65 carries an N-linked (GlcNAc...) asparagine glycan. Positions 215 to 350 (CGCECEKHPE…CSCSTASNNC (136 aa)) are cysteine-rich tandem repeats. 3 I-EGF domains span residues 219–253 (CEKH…DKCE), 254–304 (CPLA…KFCQ), and 305–342 (CDND…DDCS). Residue asparagine 274 is glycosylated (N-linked (GlcNAc...) asparagine). Asparagine 307 carries an N-linked (GlcNAc...) asparagine glycan. The disordered stretch occupies residues 354–406 (GTPAPEEKDKPESVPEEPEATEKPDDMPSDSDLEKELDESSSAKEEQTSSSGV). Residues 380-392 (MPSDSDLEKELDE) show a composition bias toward acidic residues. Residues 403-421 (SSGVVSRVCVLLTFFLLVL) form a helical membrane-spanning segment. Residues 422–423 (NF) are Cytoplasmic-facing.

It belongs to the integrin beta chain family.

The protein localises to the membrane. This is an uncharacterized protein from Caenorhabditis elegans.